The primary structure comprises 159 residues: 2-C-methyl-D-erythritol 2,4-cyclodiphosphate synthase (159 aa).

Residues Asp-8 and His-10 each contribute to the a divalent metal cation site. 4-CDP-2-C-methyl-D-erythritol 2-phosphate contacts are provided by residues 8–10 (DVH) and 34–35 (HS). His-42 is a binding site for a divalent metal cation. 4-CDP-2-C-methyl-D-erythritol 2-phosphate contacts are provided by residues 56–58 (DIG), 61–65 (FPDTD), 132–135 (TTTE), Phe-139, and Arg-142.

Belongs to the IspF family. Homotrimer. The cofactor is a divalent metal cation.

It catalyses the reaction 4-CDP-2-C-methyl-D-erythritol 2-phosphate = 2-C-methyl-D-erythritol 2,4-cyclic diphosphate + CMP. The protein operates within isoprenoid biosynthesis; isopentenyl diphosphate biosynthesis via DXP pathway; isopentenyl diphosphate from 1-deoxy-D-xylulose 5-phosphate: step 4/6. Functionally, involved in the biosynthesis of isopentenyl diphosphate (IPP) and dimethylallyl diphosphate (DMAPP), two major building blocks of isoprenoid compounds. Catalyzes the conversion of 4-diphosphocytidyl-2-C-methyl-D-erythritol 2-phosphate (CDP-ME2P) to 2-C-methyl-D-erythritol 2,4-cyclodiphosphate (ME-CPP) with a corresponding release of cytidine 5-monophosphate (CMP). The polypeptide is 2-C-methyl-D-erythritol 2,4-cyclodiphosphate synthase (Syntrophobacter fumaroxidans (strain DSM 10017 / MPOB)).